Reading from the N-terminus, the 416-residue chain is Nucleoside transporter 1 (416 aa).

Basic and acidic residues predominate over residues 1 to 26 (MSISKESSKTMIDIEKKGGEGKDGKG). Residues 1-28 (MSISKESSKTMIDIEKKGGEGKDGKGGS) form a disordered region. Over 1 to 35 (MSISKESSKTMIDIEKKGGEGKDGKGGSKMTKNEQ) the chain is Cytoplasmic. The chain crosses the membrane as a helical span at residues 36–58 (FLLPFTFILIGLSSLNVWNTALG). At 59–64 (LNINFK) the chain is on the extracellular side. Residues 65–83 (YNTFQITGLVCSSIIALFV) form a helical membrane-spanning segment. Over 84–87 (KVPK) the chain is Cytoplasmic. A helical membrane pass occupies residues 88 to 107 (MLLPFALGGLAMLCAGFQIA). At 108–119 (HQCFTFEQFDTY) the chain is on the extracellular side. A helical membrane pass occupies residues 120 to 139 (CLIAFIVIGIMAGLAQTIAF). At 140 to 148 (SVGTTMEEN) the chain is on the cytoplasmic side. A helical transmembrane segment spans residues 149-171 (MGGYMSAGIGISGVFIFIINLLL). The Extracellular segment spans residues 172 to 187 (DQIVPDQKKFNVNEAK). Residues 188–210 (LLYLFLICELCLVLAIIFSVCNL) traverse the membrane as a helical segment. Residues 211–241 (ELSSSKTSKEEEYSDKEQGLSYLELLKDSYK) are Cytoplasmic-facing. Residues 242-261 (AILAMFLVNWLSLQLFPGVG) traverse the membrane as a helical segment. Topologically, residues 262 to 273 (HKKWQESHNISD) are extracellular. The chain crosses the membrane as a helical span at residues 274 to 292 (YNVTLIVGMFQVFDFVSRY). The Cytoplasmic segment spans residues 293-311 (PPNLSHMKIFKWFTFSLNK). Residues 312 to 331 (LLLLNFLRLLFIPWFVINAA) traverse the membrane as a helical segment. Residues 332–343 (CDLPIFTNIVQQ) lie on the Extracellular side of the membrane. Residues 344–366 (CVCMAMLAFTNGWFNTVPFLVFV) form a helical membrane-spanning segment. The Cytoplasmic segment spans residues 367–380 (QELKKAKKKKDIET). A helical membrane pass occupies residues 381-403 (ISTFLVVAMFVGLFMGIWTTYIY). Residues 404-416 (DFFPIVIKRYVVP) are Extracellular-facing.

It belongs to the SLC29A/ENT transporter (TC 2.A.57) family.

It is found in the cell membrane. The catalysed reaction is inosine(in) = inosine(out). It carries out the reaction adenosine(in) = adenosine(out). The enzyme catalyses hypoxanthine(out) = hypoxanthine(in). It catalyses the reaction guanosine(in) = guanosine(out). The catalysed reaction is guanine(out) = guanine(in). It carries out the reaction thymidine(in) = thymidine(out). The enzyme catalyses uridine(out) = uridine(in). It catalyses the reaction uracil(in) = uracil(out). The catalysed reaction is thymine(out) = thymine(in). It carries out the reaction adenine(out) = adenine(in). The enzyme catalyses cytosine(out) = cytosine(in). It catalyses the reaction xanthine(out) = xanthine(in). Its function is as follows. Nucleoside and nucleobase transporter with a broad substrate specificity. The protein is Nucleoside transporter 1 of Plasmodium vivax (strain Salvador I).